The following is a 361-amino-acid chain: Spermidine/putrescine import ATP-binding protein PotA (361 aa).

In terms of domain architecture, ABC transporter spans 7–241 (IEVRNVSKRY…PQHRFVAQFI (235 aa)). 43-50 (GPSGCGKT) serves as a coordination point for ATP.

It belongs to the ABC transporter superfamily. Spermidine/putrescine importer (TC 3.A.1.11.1) family. As to quaternary structure, the complex is composed of two ATP-binding proteins (PotA), two transmembrane proteins (PotB and PotC) and a solute-binding protein (PotD).

It localises to the cell inner membrane. It carries out the reaction ATP + H2O + polyamine-[polyamine-binding protein]Side 1 = ADP + phosphate + polyamineSide 2 + [polyamine-binding protein]Side 1.. In terms of biological role, part of the ABC transporter complex PotABCD involved in spermidine/putrescine import. Responsible for energy coupling to the transport system. This is Spermidine/putrescine import ATP-binding protein PotA from Pseudomonas fluorescens (strain Pf0-1).